Here is a 494-residue protein sequence, read N- to C-terminus: Glutamate--tRNA ligase (494 aa).

The 'HIGH' region signature appears at Pro10–Thr20. The Zn(2+) site is built by Cys107, Cys109, Cys134, and His136. Positions Lys251–Arg255 match the 'KMSKS' region motif. Residue Lys254 participates in ATP binding.

Belongs to the class-I aminoacyl-tRNA synthetase family. Glutamate--tRNA ligase type 1 subfamily. In terms of assembly, monomer. Requires Zn(2+) as cofactor.

The protein localises to the cytoplasm. The enzyme catalyses tRNA(Glu) + L-glutamate + ATP = L-glutamyl-tRNA(Glu) + AMP + diphosphate. Its function is as follows. Catalyzes the attachment of glutamate to tRNA(Glu) in a two-step reaction: glutamate is first activated by ATP to form Glu-AMP and then transferred to the acceptor end of tRNA(Glu). This Pseudomonas paraeruginosa (strain DSM 24068 / PA7) (Pseudomonas aeruginosa (strain PA7)) protein is Glutamate--tRNA ligase.